The following is a 146-amino-acid chain: uncharacterized protein (146 aa).

This is an uncharacterized protein from Aquifex aeolicus (strain VF5).